Here is a 253-residue protein sequence, read N- to C-terminus: Small ribosomal subunit protein uS2 (253 aa).

Belongs to the universal ribosomal protein uS2 family.

The polypeptide is Small ribosomal subunit protein uS2 (Parvibaculum lavamentivorans (strain DS-1 / DSM 13023 / NCIMB 13966)).